Consider the following 286-residue polypeptide: Pyridoxal kinase PdxY (286 aa).

Residues S9 and M44–Q45 contribute to the substrate site. D111, E147, and K180 together coordinate ATP. D221 contacts substrate.

Belongs to the pyridoxine kinase family. PdxY subfamily. As to quaternary structure, homodimer. It depends on Mg(2+) as a cofactor.

It carries out the reaction pyridoxal + ATP = pyridoxal 5'-phosphate + ADP + H(+). The protein operates within cofactor metabolism; pyridoxal 5'-phosphate salvage; pyridoxal 5'-phosphate from pyridoxal: step 1/1. Functionally, pyridoxal kinase involved in the salvage pathway of pyridoxal 5'-phosphate (PLP). Catalyzes the phosphorylation of pyridoxal to PLP. The sequence is that of Pyridoxal kinase PdxY from Burkholderia lata (strain ATCC 17760 / DSM 23089 / LMG 22485 / NCIMB 9086 / R18194 / 383).